Consider the following 28-residue polypeptide: Somatostatin-2 (28 aa).

A disulfide bridge links cysteine 17 with cysteine 28.

It belongs to the somatostatin family.

Its subcellular location is the secreted. Functionally, somatostatin inhibits the release of somatotropin. In Oreochromis niloticus (Nile tilapia), this protein is Somatostatin-2 (sst2).